A 91-amino-acid polypeptide reads, in one-letter code: Small membrane A-kinase anchor protein (91 aa).

A lipid anchor (N-myristoyl glycine) is attached at G2.

This sequence belongs to the small membrane AKAP family. In terms of processing, may be palmitoylated at Cys-3.

The protein resides in the cell membrane. Binds to type I regulatory subunits of protein kinase A and may anchor/target them to the plasma membrane. This chain is Small membrane A-kinase anchor protein, found in Xenopus tropicalis (Western clawed frog).